A 238-amino-acid chain; its full sequence is Ribonuclease 3 (238 aa).

Residues 4 to 130 (IQTLFQTLNI…LFGAIYLDLG (127 aa)) form the RNase III domain. Mg(2+) is bound at residue Glu-45. Residue Asp-49 is part of the active site. Mg(2+) contacts are provided by Asp-116 and Glu-119. Glu-119 is a catalytic residue. The region spanning 154 to 222 (DFKTQLQEIV…AQQALSKVAK (69 aa)) is the DRBM domain. The disordered stretch occupies residues 215-238 (QALSKVAKPKDLLNNKGGKEKELQ). Basic and acidic residues predominate over residues 222–238 (KPKDLLNNKGGKEKELQ).

Belongs to the ribonuclease III family. In terms of assembly, homodimer. Mg(2+) is required as a cofactor.

Its subcellular location is the cytoplasm. It catalyses the reaction Endonucleolytic cleavage to 5'-phosphomonoester.. In terms of biological role, digests double-stranded RNA. Involved in the processing of primary rRNA transcript to yield the immediate precursors to the large and small rRNAs (23S and 16S). Processes some mRNAs, and tRNAs when they are encoded in the rRNA operon. Processes pre-crRNA and tracrRNA of type II CRISPR loci if present in the organism. In Onion yellows phytoplasma (strain OY-M), this protein is Ribonuclease 3.